The primary structure comprises 230 residues: MSQVHALSDDQVGQELRKMTAFIKQEAEEKAREIQIKADEEFAIEKSKLVRQETDAIDSAYAKKFKQAQMSQQITRSTMANKTRLRVLGARQELLDEIFEAASAQLGQATHDLGRYKDILRDLILEGFYAMNEPELVIRARQADYDAVREAAGWASAQYKHKTDKDVKATIDAENPVPEGSAGGIIIVGGNGKIDIDNTFEARLTLLKDSALPAMRKALFGENPNRKFFD.

This sequence belongs to the V-ATPase E subunit family. V-ATPase is a heteromultimeric enzyme composed of a peripheral catalytic V1 complex (components A to H) attached to an integral membrane V0 proton pore complex (components: a, c, c', c'', d, e, f and VOA1).

The protein resides in the vacuole membrane. Its function is as follows. Subunit of the V1 complex of vacuolar(H+)-ATPase (V-ATPase), a multisubunit enzyme composed of a peripheral complex (V1) that hydrolyzes ATP and a membrane integral complex (V0) that translocates protons. V-ATPase is responsible for acidifying and maintaining the pH of intracellular compartments. The sequence is that of V-type proton ATPase subunit E from Neurospora crassa (strain ATCC 24698 / 74-OR23-1A / CBS 708.71 / DSM 1257 / FGSC 987).